The following is a 139-amino-acid chain: MRLTQGCFSFLPDLTDQQIEKQIAYCIDKGWAMNVEWTDDPHPRNSYWELWGLPLFDIKDIASVMFELSEARKSCANGYIRMNAFDASYGTESCVMSFIVSRPSNEPGFYLERTEGAGRFITYTIKRYSVQANAEGSRY.

The protein belongs to the RuBisCO small chain family. As to quaternary structure, heterohexadecamer of 8 large and 8 small subunits.

Its subcellular location is the plastid. The protein localises to the chloroplast. Its function is as follows. RuBisCO catalyzes two reactions: the carboxylation of D-ribulose 1,5-bisphosphate, the primary event in carbon dioxide fixation, as well as the oxidative fragmentation of the pentose substrate in the photorespiration process. Both reactions occur simultaneously and in competition at the same active site. Although the small subunit is not catalytic it is essential for maximal activity. In Trieres chinensis (Marine centric diatom), this protein is Ribulose bisphosphate carboxylase small subunit.